The primary structure comprises 261 residues: MFDKLSIIFNSDRKRKVHLSKAITEISLKLKEQQDRLDEAIRRLRERDKDLFEKVIRSQIEGDIARATIYAQEISDIRKMIKIIYTAYLAIEKVRLKLDTVQELQGVSLVLFPVMRILGELKEQVRGIAPEVALALDSITSSVNSIAIETGALSEKTFVPTVADEQAKQIMEEAQKMAEVKVRELLPELPHPPSELPKRVAKQVQSSNKKSLSEDMILNYIKTTGGFIDVDYIAKNFDVSKDEVFNVLRRLEEKGLIVLEG.

A winged-helix-like fold region spans residues 213 to 261; the sequence is SEDMILNYIKTTGGFIDVDYIAKNFDVSKDEVFNVLRRLEEKGLIVLEG.

Interacts with CdvA. Interacts with CdvC.

It is found in the cytoplasm. The protein resides in the nucleoid. Functionally, part of a cell division machinery. The CdvA, CdvB and CdvC proteins polymerize between segregating nucleoids and persist throughout cell division, forming a successively smaller structure during constriction. This Sulfolobus acidocaldarius (strain ATCC 33909 / DSM 639 / JCM 8929 / NBRC 15157 / NCIMB 11770) protein is Cell division protein B.